The sequence spans 74 residues: Putative membrane protein insertion efficiency factor (74 aa).

This sequence belongs to the UPF0161 family.

It localises to the cell inner membrane. Functionally, could be involved in insertion of integral membrane proteins into the membrane. The polypeptide is Putative membrane protein insertion efficiency factor (Anaeromyxobacter sp. (strain Fw109-5)).